The following is a 394-amino-acid chain: DNA replication and repair protein RecF (394 aa).

An ATP-binding site is contributed by 30–37 (GSNGQGKT).

It belongs to the RecF family.

It is found in the cytoplasm. The RecF protein is involved in DNA metabolism; it is required for DNA replication and normal SOS inducibility. RecF binds preferentially to single-stranded, linear DNA. It also seems to bind ATP. The protein is DNA replication and repair protein RecF of Cutibacterium acnes (strain DSM 16379 / KPA171202) (Propionibacterium acnes).